Consider the following 392-residue polypeptide: 1-deoxy-D-xylulose 5-phosphate reductoisomerase (392 aa).

NADPH-binding residues include T10, G11, S12, I13, N38, and N124. A 1-deoxy-D-xylulose 5-phosphate-binding site is contributed by K125. An NADPH-binding site is contributed by E126. D150 is a Mn(2+) binding site. Residues S151, E152, S176, and H199 each contribute to the 1-deoxy-D-xylulose 5-phosphate site. E152 lines the Mn(2+) pocket. G205 contributes to the NADPH binding site. 4 residues coordinate 1-deoxy-D-xylulose 5-phosphate: S212, N217, K218, and E221. E221 provides a ligand contact to Mn(2+).

It belongs to the DXR family. Requires Mg(2+) as cofactor. The cofactor is Mn(2+).

It catalyses the reaction 2-C-methyl-D-erythritol 4-phosphate + NADP(+) = 1-deoxy-D-xylulose 5-phosphate + NADPH + H(+). Its pathway is isoprenoid biosynthesis; isopentenyl diphosphate biosynthesis via DXP pathway; isopentenyl diphosphate from 1-deoxy-D-xylulose 5-phosphate: step 1/6. Catalyzes the NADPH-dependent rearrangement and reduction of 1-deoxy-D-xylulose-5-phosphate (DXP) to 2-C-methyl-D-erythritol 4-phosphate (MEP). This is 1-deoxy-D-xylulose 5-phosphate reductoisomerase from Gloeobacter violaceus (strain ATCC 29082 / PCC 7421).